We begin with the raw amino-acid sequence, 900 residues long: Phospholipase DDHD1 (900 aa).

Disordered regions lie at residues 1–28 (MNYPGRGSPRSPEHNGRGGGGGAWELGS), 100–152 (LRYY…GGPA), and 202–233 (GARPQGGDRDGDHVCSPTGPASSSGEDDDEDR). Phosphoserine is present on residues serine 8 and serine 11. The segment covering 130–140 (SGGGGATGGSP) has biased composition (gly residues). The active site involves serine 537. Positions 611-886 (LKFKVENFFC…ALFLLTFMYK (276 aa)) constitute a DDHD domain. Disordered stretches follow at residues 706–725 (AKEPTSVSENEGISTIPSPV) and 768–801 (SSTTQSSETSKDSMEDEKKPVASPSATTVGTQTL). The segment covering 710-725 (TSVSENEGISTIPSPV) has biased composition (polar residues). Serine 723 carries the phosphoserine modification. Basic and acidic residues predominate over residues 776–787 (TSKDSMEDEKKP). Polar residues predominate over residues 791 to 801 (PSATTVGTQTL).

The protein belongs to the PA-PLA1 family. In terms of assembly, forms homooligomers and, to a much smaller extent, heterooligomers with DDHD2. In terms of tissue distribution, highly expressed in testis. Also expressed in brain, spleen and lung. Only expressed in cerebellum in fetal brain.

It is found in the cytoplasm. The catalysed reaction is a 1,2-diacyl-sn-glycero-3-phosphate + H2O = a 2-acyl-sn-glycerol 3-phosphate + a fatty acid + H(+). It catalyses the reaction a 1,2-diacyl-sn-glycero-3-phospho-(1D-myo-inositol) + H2O = a 2-acyl-sn-glycero-3-phospho-D-myo-inositol + a fatty acid + H(+). The enzyme catalyses 1-octadecanoyl-2-(5Z,8Z,11Z,14Z-eicosatetraenoyl)-sn-glycero-3-phospho-(1D-myo-inositol) + H2O = 2-(5Z,8Z,11Z,14Z-eicosatetraenoyl)-sn-glycero-3-phospho-(1D-myo-inositol) + octadecanoate + H(+). It carries out the reaction a 1-acyl-2-(5Z,8Z,11Z,14Z-eicosatetraenoyl)-sn-glycero-3-phospho-(1D-myo-inositol) + H2O = 2-(5Z,8Z,11Z,14Z-eicosatetraenoyl)-sn-glycero-3-phospho-(1D-myo-inositol) + a fatty acid + H(+). The catalysed reaction is 1,2-dihexadecanoyl-sn-glycero-3-phospho-(1D-myo-inositol) + H2O = 2-hexadecanoyl-sn-glycero-3-phospho-(1D-myo-inositol) + hexadecanoate + H(+). It catalyses the reaction a 1-acyl-2-(5Z,8Z,11Z,14Z)-eicosatetraenoyl-sn-glycero-3-phosphate + H2O = 2-(5Z,8Z,11Z,14Z-eicosatetraenoyl)-sn-glycero-3-phosphate + a fatty acid + H(+). The enzyme catalyses 1,2-di-(9Z-octadecenoyl)-sn-glycero-3-phosphate + H2O = 2-(9Z-octadecenoyl)-sn-glycero-3-phosphate + (9Z)-octadecenoate + H(+). It carries out the reaction 1-hexadecanoyl-2-(9Z-octadecenoyl)-sn-glycero-3-phosphate + H2O = 2-(9Z-octadecenoyl)-sn-glycero-3-phosphate + hexadecanoate + H(+). The catalysed reaction is 1-hexadecanoyl-2-(9Z-octadecenoyl)-sn-glycero-3-phospho-L-serine + H2O = 2-(9Z-octadecenoyl)-sn-glycero-3-phospho-L-serine + hexadecanoate + H(+). It catalyses the reaction 1,2-di-(5Z,8Z,11Z,14Z)-eicosatetraenoyl-sn-glycero-3-phosphate + H2O = 2-(5Z,8Z,11Z,14Z-eicosatetraenoyl)-sn-glycero-3-phosphate + (5Z,8Z,11Z,14Z)-eicosatetraenoate + H(+). The enzyme catalyses 1-octadecanoyl-2-(5Z,8Z,11Z,14Z-eicosatetraenoyl)-sn-glycero-3-phosphate + H2O = 2-(5Z,8Z,11Z,14Z-eicosatetraenoyl)-sn-glycero-3-phosphate + octadecanoate + H(+). It carries out the reaction a 1,2-diacyl-sn-glycero-3-phosphocholine + H2O = a 2-acyl-sn-glycero-3-phosphocholine + a fatty acid + H(+). The catalysed reaction is a 1,2-diacyl-sn-glycero-3-phosphoethanolamine + H2O = a 2-acyl-sn-glycero-3-phosphoethanolamine + a fatty acid + H(+). It catalyses the reaction a 1,2-diacyl-sn-glycero-3-phospho-L-serine + H2O = a 2-acyl-sn-glycero-3-phospho-L-serine + a fatty acid + H(+). The enzyme catalyses a 1,2-diacyl-sn-glycero-3-phospho-(1'-sn-glycerol) + H2O = 2-acyl-sn-glycero-3-phospho-(1'-sn-glycerol) + a fatty acid + H(+). It carries out the reaction 1-hexadecanoyl-2-(9Z-octadecenoyl)-sn-glycero-3-phospho-(1'-sn-glycerol) + H2O = 2-(9Z-octadecenoyl)-sn-glycero-3-phospho-(1'-sn-glycerol) + hexadecanoate + H(+). The catalysed reaction is 1-acyl-2-(5Z,8Z,11Z,14Z-eicosatetraenoyl)-sn-glycero-3-phosphocholine + H2O = 2-(5Z,8Z,11Z,14Z)-eicosatetraenoyl-sn-glycero-3-phosphocholine + a fatty acid + H(+). It catalyses the reaction 1-acyl-2-(5Z,8Z,11Z,14Z)-eicosatetraenoyl-sn-glycero-3-phosphoethanolamine + H2O = 2-(5Z,8Z,11Z,14Z)-eicosatetraenoyl-sn-glycero-3-phosphoethanolamine + a fatty acid + H(+). The enzyme catalyses 1-(9Z-octadecenoyl)-2-(7Z,10Z,13Z,16Z,19Z-docosapentaenoyl)-sn-glycero-3-phospho-1D-myo-inositol + H2O = 2-(7Z,10Z,13Z,16Z,19Z-docosapentaenoyl)-sn-glycero-3-phospho-1D-myo-inositol + (9Z)-octadecenoate + H(+). It carries out the reaction 1-(9Z-octadecenoyl)-2-(5Z,8Z,11Z,14Z-eicosatetraenoyl)-sn-glycero-3-phospho-1D-myo-inositol + H2O = 2-(5Z,8Z,11Z,14Z-eicosatetraenoyl)-sn-glycero-3-phospho-(1D-myo-inositol) + (9Z)-octadecenoate + H(+). The catalysed reaction is 1,2-di-(9Z-octadecenoyl)-sn-glycero-3-phospho-1D-myo-inositol + H2O = 2-(9Z-octadecenoyl)-sn-glycero-3-phospho-1D-myo-inositol + (9Z)-octadecenoate + H(+). It catalyses the reaction 1-(9Z-octadecenoyl)-2-(8Z,11Z,14Z-eicosatrienoyl)-sn-glycero-3-phospho-1D-myo-inositol + H2O = 2-(8Z,11Z,14Z-eicosatrienoyl)-sn-glycero-3-phospho-1D-myo-inositol + (9Z)-octadecenoate + H(+). The enzyme catalyses 1,2-di-(9Z-octadecenoyl)-sn-glycero-3-phosphocholine + H2O = (9Z-octadecenoyl)-sn-glycero-3-phosphocholine + (9Z)-octadecenoate + H(+). Its pathway is phospholipid metabolism; phosphatidylinositol metabolism. With respect to regulation, phosphatidate (1,2-diacyl-sn-glycero-3-phosphate, PA) can positively regulate phospholipase A1 activity. In terms of biological role, phospholipase A1 (PLA1) that hydrolyzes ester bonds at the sn-1 position of glycerophospholipids producing a free fatty acid and a lysophospholipid. Prefers phosphatidate (1,2-diacyl-sn-glycero-3-phosphate, PA) as substrate in vitro, but can efficiently hydrolyze phosphatidylinositol (1,2-diacyl-sn-glycero-3-phospho-(1D-myo-inositol), PI), as well as a range of other glycerophospholipid substrates such as phosphatidylcholine (1,2-diacyl-sn-glycero-3-phosphocholine, PC), phosphatidylethanolamine (1,2-diacyl-sn-glycero-3-phosphoethanolamine, PE), phosphatidylserine (1,2-diacyl-sn-glycero-3-phospho-L-serine, PS) and phosphatidylglycerol (1,2-diacyl-sn-glycero-3-phospho-(1'-sn-glycerol), PG). Involved in the regulation of the endogenous content of polyunsaturated PI and PS lipids in the nervous system. Changes in these lipids extend to downstream metabolic products like PI phosphates PIP and PIP2, which play fundamental roles in cell biology. Regulates mitochondrial morphology. These dynamic changes may be due to PA hydrolysis at the mitochondrial surface. May play a regulatory role in spermatogenesis or sperm function. This chain is Phospholipase DDHD1, found in Homo sapiens (Human).